The sequence spans 974 residues: Isoleucine--tRNA ligase (974 aa).

The short motif at 69-79 is the 'HIGH' region element; sequence PYANGALHMGH. An L-isoleucyl-5'-AMP-binding site is contributed by Glu-585. The 'KMSKS' region motif lies at 626–630; the sequence is KMSKS. Lys-629 is a binding site for ATP. Zn(2+) is bound by residues Cys-939, Cys-942, Cys-959, and Cys-962.

It belongs to the class-I aminoacyl-tRNA synthetase family. IleS type 1 subfamily. In terms of assembly, monomer. Zn(2+) serves as cofactor.

It is found in the cytoplasm. It carries out the reaction tRNA(Ile) + L-isoleucine + ATP = L-isoleucyl-tRNA(Ile) + AMP + diphosphate. Its function is as follows. Catalyzes the attachment of isoleucine to tRNA(Ile). As IleRS can inadvertently accommodate and process structurally similar amino acids such as valine, to avoid such errors it has two additional distinct tRNA(Ile)-dependent editing activities. One activity is designated as 'pretransfer' editing and involves the hydrolysis of activated Val-AMP. The other activity is designated 'posttransfer' editing and involves deacylation of mischarged Val-tRNA(Ile). In Parasynechococcus marenigrum (strain WH8102), this protein is Isoleucine--tRNA ligase.